The following is a 968-amino-acid chain: RNA polymerase-associated protein RapA (968 aa).

Residues 164 to 334 (DVGRRHAPRV…FARLRLLDPN (171 aa)) form the Helicase ATP-binding domain. 177 to 184 (DEVGLGKT) serves as a coordination point for ATP. The short motif at 280-283 (DEAH) is the DEAH box element. The 173-residue stretch at 490 to 662 (RVEWLMGYLT…YLASPDETEG (173 aa)) folds into the Helicase C-terminal domain.

The protein belongs to the SNF2/RAD54 helicase family. RapA subfamily. In terms of assembly, interacts with the RNAP. Has a higher affinity for the core RNAP than for the holoenzyme. Its ATPase activity is stimulated by binding to RNAP.

In terms of biological role, transcription regulator that activates transcription by stimulating RNA polymerase (RNAP) recycling in case of stress conditions such as supercoiled DNA or high salt concentrations. Probably acts by releasing the RNAP, when it is trapped or immobilized on tightly supercoiled DNA. Does not activate transcription on linear DNA. Probably not involved in DNA repair. This is RNA polymerase-associated protein RapA from Escherichia coli O81 (strain ED1a).